The sequence spans 276 residues: NH(3)-dependent NAD(+) synthetase (276 aa).

43-50 (GISGGVDS) contributes to the ATP binding site. Asp49 provides a ligand contact to Mg(2+). Position 146 (Arg146) interacts with deamido-NAD(+). ATP is bound at residue Thr166. Glu171 is a Mg(2+) binding site. Deamido-NAD(+) is bound by residues Lys179 and Asp186. The ATP site is built by Lys195 and Thr217. Position 266 to 267 (266 to 267 (HK)) interacts with deamido-NAD(+).

Belongs to the NAD synthetase family. As to quaternary structure, homodimer.

The enzyme catalyses deamido-NAD(+) + NH4(+) + ATP = AMP + diphosphate + NAD(+) + H(+). It functions in the pathway cofactor biosynthesis; NAD(+) biosynthesis; NAD(+) from deamido-NAD(+) (ammonia route): step 1/1. Its function is as follows. Catalyzes the ATP-dependent amidation of deamido-NAD to form NAD. Uses ammonia as a nitrogen source. This is NH(3)-dependent NAD(+) synthetase from Vibrio vulnificus (strain CMCP6).